The sequence spans 130 residues: Small ribosomal subunit protein uS11c (130 aa).

It belongs to the universal ribosomal protein uS11 family. Part of the 30S ribosomal subunit.

It localises to the plastid. The protein resides in the chloroplast. The polypeptide is Small ribosomal subunit protein uS11c (Marsilea quadrifolia (European water clover)).